The following is a 71-amino-acid chain: Small ribosomal subunit protein bS21 (71 aa).

Belongs to the bacterial ribosomal protein bS21 family.

In Acidithiobacillus ferrooxidans (strain ATCC 23270 / DSM 14882 / CIP 104768 / NCIMB 8455) (Ferrobacillus ferrooxidans (strain ATCC 23270)), this protein is Small ribosomal subunit protein bS21.